The sequence spans 362 residues: Probable secreted beta-glucosidase UTH1 (362 aa).

An N-terminal signal peptide occupies residues 1 to 17 (MKLSALLALSASTAVLA).

It belongs to the SUN family.

Its subcellular location is the mitochondrion outer membrane. The protein resides in the secreted. It is found in the cell wall. Involved in aging, oxidative stress response, and in the regulation of mitochondrial biogenesis. Inactivation of UTH1 increases life span, leads to higher resistance to heat stress and to hydrogen peroxide, and increases sensitivity to the superoxide radical-generating drug paraquat and to copper. Also required for the selective autophagic degradation of mitochondria (mitophagy) in response to nitrogen starvation. May play a role in cell wall morphogenesis and septation. Involved in the remodeling of the cell wall during the various phases of yeast culture development and under various environmental conditions and plays a role in septation. Involved in cell sensitivity to boric acid. The protein is Probable secreted beta-glucosidase UTH1 (UTH1) of Saccharomyces cerevisiae (strain YJM789) (Baker's yeast).